Reading from the N-terminus, the 398-residue chain is Succinate--CoA ligase [ADP-forming] subunit beta (398 aa).

The region spanning Lys-9 to Glu-254 is the ATP-grasp domain. Residues Lys-46, Gly-53–Gly-55, Glu-109, Ser-112, and Glu-117 contribute to the ATP site. Asn-209 and Asp-223 together coordinate Mg(2+). Substrate contacts are provided by residues Asn-274 and Gly-331 to Met-333.

Belongs to the succinate/malate CoA ligase beta subunit family. In terms of assembly, heterotetramer of two alpha and two beta subunits. Requires Mg(2+) as cofactor.

The enzyme catalyses succinate + ATP + CoA = succinyl-CoA + ADP + phosphate. The catalysed reaction is GTP + succinate + CoA = succinyl-CoA + GDP + phosphate. It functions in the pathway carbohydrate metabolism; tricarboxylic acid cycle; succinate from succinyl-CoA (ligase route): step 1/1. In terms of biological role, succinyl-CoA synthetase functions in the citric acid cycle (TCA), coupling the hydrolysis of succinyl-CoA to the synthesis of either ATP or GTP and thus represents the only step of substrate-level phosphorylation in the TCA. The beta subunit provides nucleotide specificity of the enzyme and binds the substrate succinate, while the binding sites for coenzyme A and phosphate are found in the alpha subunit. This is Succinate--CoA ligase [ADP-forming] subunit beta from Bradyrhizobium diazoefficiens (strain JCM 10833 / BCRC 13528 / IAM 13628 / NBRC 14792 / USDA 110).